Here is a 363-residue protein sequence, read N- to C-terminus: 3-isopropylmalate dehydrogenase A (363 aa).

Position 78 to 89 (78 to 89 (GPKWGTGAVRPE)) interacts with NAD(+). Positions 96, 106, 135, and 222 each coordinate substrate. Mg(2+) contacts are provided by Asp-222, Asp-247, and Asp-251. 287–299 (GSAPDIAGKGIVN) serves as a coordination point for NAD(+).

This sequence belongs to the isocitrate and isopropylmalate dehydrogenases family. In terms of assembly, homodimer. Mg(2+) is required as a cofactor. Mn(2+) serves as cofactor.

The protein resides in the cytoplasm. It catalyses the reaction (2R,3S)-3-isopropylmalate + NAD(+) = 4-methyl-2-oxopentanoate + CO2 + NADH. The protein operates within amino-acid biosynthesis; L-leucine biosynthesis; L-leucine from 3-methyl-2-oxobutanoate: step 3/4. Catalyzes the oxidation of 3-carboxy-2-hydroxy-4-methylpentanoate (3-isopropylmalate) to 3-carboxy-4-methyl-2-oxopentanoate. The product decarboxylates to 4-methyl-2 oxopentanoate. The protein is 3-isopropylmalate dehydrogenase A (leu2A) of Aspergillus niger.